A 357-amino-acid polypeptide reads, in one-letter code: Serine proteinase inhibitor 1 (357 aa).

The protein belongs to the serpin family. Poxviruses subfamily.

The protein resides in the host cytoplasm. Its function is as follows. Plays a role in mediating viral host range. May act to inhibit a caspase independent form of apoptosis to allow efficient virus replication in infected cells. In Monkeypox virus, this protein is Serine proteinase inhibitor 1 (OPG208).